The primary structure comprises 427 residues: tRNA(Ile)-lysidine synthase (427 aa).

Residue 25–30 coordinates ATP; that stretch reads SGGLDS.

This sequence belongs to the tRNA(Ile)-lysidine synthase family.

The protein resides in the cytoplasm. The catalysed reaction is cytidine(34) in tRNA(Ile2) + L-lysine + ATP = lysidine(34) in tRNA(Ile2) + AMP + diphosphate + H(+). In terms of biological role, ligates lysine onto the cytidine present at position 34 of the AUA codon-specific tRNA(Ile) that contains the anticodon CAU, in an ATP-dependent manner. Cytidine is converted to lysidine, thus changing the amino acid specificity of the tRNA from methionine to isoleucine. This Histophilus somni (strain 129Pt) (Haemophilus somnus) protein is tRNA(Ile)-lysidine synthase.